Reading from the N-terminus, the 65-residue chain is SPbeta prophage-derived uncharacterized protein YorO (65 aa).

In Bacillus subtilis (strain 168), this protein is SPbeta prophage-derived uncharacterized protein YorO (yorO).